The sequence spans 55 residues: Large ribosomal subunit protein bL33 (55 aa).

Belongs to the bacterial ribosomal protein bL33 family.

This chain is Large ribosomal subunit protein bL33, found in Sodalis glossinidius (strain morsitans).